Consider the following 456-residue polypeptide: Yersinopine synthase (456 aa).

Residues 12–15 (AGPA), 35–40 (NRPSTK), and Thr-154 each bind NADP(+). The active-site Proton donor/acceptor is His-242.

The protein belongs to the staphylopine dehydrogenase family. In terms of assembly, homodimer.

It carries out the reaction yersinopine + NADP(+) + H2O = (2S)-2-amino-4-{[(1S)-1-carboxy-2-(1H-imidazol-4-yl)ethyl]amino}butanoate + pyruvate + NADPH + H(+). Its function is as follows. Catalyzes the NADPH-dependent reductive condensation of pyruvate to the intermediate formed by the adjacently encoded enzyme y2836, namely (2S)-2-amino-4-{[(1S)-1-carboxy-2-(1H-imidazol-4-yl)ethyl]amino}butanoate, leading to the production of yersinopine. This is the last step in the biosynthesis of the metallophore yersinopine, which is involved in metal acquisition and thus enables bacterial growth inside the host, where metal access is limited. Therefore, this enzyme probably contributes to Yersinia virulence. Cannot use alpha-ketoglutarate in place of pyruvate, and displays only poor efficiency with oxaloacetate and glyoxylate. The protein is Yersinopine synthase of Yersinia pestis.